Consider the following 297-residue polypeptide: Adrenocorticotropic hormone receptor (297 aa).

Topologically, residues 1 to 23 (MKHIINSYENINNTARNNSDCPR) are extracellular. 2 N-linked (GlcNAc...) asparagine glycosylation sites follow: asparagine 12 and asparagine 17. 2 cysteine pairs are disulfide-bonded: cysteine 21/cysteine 253 and cysteine 245/cysteine 251. Residues 24–49 (VVLPEEIFFTISIVGVLENLIVLLAV) traverse the membrane as a helical segment. Residues 50–58 (FKNKNLQAP) are Cytoplasmic-facing. Residues 59 to 79 (MYFFICSLAISDMLGSLYKIL) form a helical membrane-spanning segment. The Extracellular segment spans residues 80-104 (ENILIILRNMGYLKPRGSFETTADD). Residues 105–126 (IIDSLFVLSLLGSIFSLSVIAA) traverse the membrane as a helical segment. Topologically, residues 127 to 147 (DRYITIFHALRYHSIVTMRRT) are cytoplasmic. A helical membrane pass occupies residues 148–168 (VVVLTVIWTFCTGTGITMVIF). Topologically, residues 169-180 (SHHVPTVITFTS) are extracellular. The chain crosses the membrane as a helical span at residues 181–199 (LFPLMLVFILCLYVHMFLL). Residues 200 to 217 (ARSHTRKISTLPRANMKG) lie on the Cytoplasmic side of the membrane. Residues 218–244 (AITLTILLGVFIFCWAPFVLHVLLMTF) form a helical membrane-spanning segment. Residues 245-256 (CPSNPYCACYMS) are Extracellular-facing. Residues 257–278 (LFQVNGMLIMCNAVIDPFIYAF) traverse the membrane as a helical segment. The Cytoplasmic portion of the chain corresponds to 279–297 (RSPELRDAFKKMIFCSRYW). A lipid anchor (S-palmitoyl cysteine) is attached at cysteine 293.

This sequence belongs to the G-protein coupled receptor 1 family. In terms of assembly, homodimer. Interacts with corticotropin (ACTH). Interacts with MRAP; this interaction targets MC2R to the plasma membrane. Interacts with MRAP2; competing with MRAP for binding to MC2R and impairing the binding of corticotropin (ACTH). Ubiquitinated by MGRN1 that may be involved in post-endocytic trafficking and/or degradation of internalized receptor. Melanocytes and corticoadrenal tissue.

Its subcellular location is the cell membrane. Hormone receptor primarily expressed in adrenal cortex that plays a key role in regulating adrenocortical function. Upon corticotropin (ACTH) binding, facilitates the release of adrenal glucocorticoids, including cortisol and corticosterone. In addition, MC2R is required for fetal and neonatal adrenal gland development. Mechanistically, activates adenylate cyclase (cAMP), the MAPK cascade as well as the cAMP-dependent protein kinase A pathway leading to steroidogenic factor 1/NR5A1-mediated transcriptional activation. This chain is Adrenocorticotropic hormone receptor (MC2R), found in Homo sapiens (Human).